A 112-amino-acid polypeptide reads, in one-letter code: uncharacterized protein (112 aa).

A helical membrane pass occupies residues 75-95; the sequence is ILGVFGGFIYILTPLPIVSGF.

It localises to the membrane. This is an uncharacterized protein from Methanocaldococcus jannaschii (strain ATCC 43067 / DSM 2661 / JAL-1 / JCM 10045 / NBRC 100440) (Methanococcus jannaschii).